Consider the following 364-residue polypeptide: Peroxisome biogenesis protein 3-2 (364 aa).

The chain crosses the membrane as a helical span at residues 15-32 (VLVTAGCLGSGYLLYKLY). Residues 33 to 62 (NSHTRRLADLERELAHERENDEIIKTQMKA) adopt a coiled-coil conformation.

This sequence belongs to the peroxin-3 family.

It is found in the peroxisome membrane. In terms of biological role, involved in morphology determination of peroxisomes, but not in import of peroxisomal matrix proteins. May act as a docking factor for PEX19 and be necessary for the import of peroxisomal membrane proteins in the peroxisomes. This chain is Peroxisome biogenesis protein 3-2 (PEX3-2), found in Arabidopsis thaliana (Mouse-ear cress).